We begin with the raw amino-acid sequence, 549 residues long: Threonine--tRNA ligase catalytic subunit (549 aa).

The tract at residues 142 to 437 is catalytic; it reads DHRIIGDRLD…LLEHFRGKLP (296 aa). Residues Cys-235, His-286, and His-414 each coordinate Zn(2+).

This sequence belongs to the class-II aminoacyl-tRNA synthetase family. In terms of assembly, homodimer. Probably interacts with its editing subunit. Zn(2+) serves as cofactor.

The protein resides in the cytoplasm. The enzyme catalyses tRNA(Thr) + L-threonine + ATP = L-threonyl-tRNA(Thr) + AMP + diphosphate + H(+). Functionally, catalyzes the attachment of threonine to tRNA(Thr) in a two-step reaction: L-threonine is first activated by ATP to form Thr-AMP and then transferred to the acceptor end of tRNA(Thr). Also activates L-serine and transfers it to tRNA(Thr) but cannot deacylate incorrectly charged amino acid; unlike most archaea the editing function is found in a freestanding protein. The sequence is that of Threonine--tRNA ligase catalytic subunit from Sulfolobus acidocaldarius (strain ATCC 33909 / DSM 639 / JCM 8929 / NBRC 15157 / NCIMB 11770).